We begin with the raw amino-acid sequence, 101 residues long: ATP-dependent Clp protease adapter protein ClpS (101 aa).

The protein belongs to the ClpS family. In terms of assembly, binds to the N-terminal domain of the chaperone ClpA.

Functionally, involved in the modulation of the specificity of the ClpAP-mediated ATP-dependent protein degradation. The protein is ATP-dependent Clp protease adapter protein ClpS of Corynebacterium efficiens (strain DSM 44549 / YS-314 / AJ 12310 / JCM 11189 / NBRC 100395).